The primary structure comprises 454 residues: Probable glycine dehydrogenase (decarboxylating) subunit 1 (454 aa).

It belongs to the GcvP family. N-terminal subunit subfamily. As to quaternary structure, the glycine cleavage system is composed of four proteins: P, T, L and H. In this organism, the P 'protein' is a heterodimer of two subunits.

The enzyme catalyses N(6)-[(R)-lipoyl]-L-lysyl-[glycine-cleavage complex H protein] + glycine + H(+) = N(6)-[(R)-S(8)-aminomethyldihydrolipoyl]-L-lysyl-[glycine-cleavage complex H protein] + CO2. The glycine cleavage system catalyzes the degradation of glycine. The P protein binds the alpha-amino group of glycine through its pyridoxal phosphate cofactor; CO(2) is released and the remaining methylamine moiety is then transferred to the lipoamide cofactor of the H protein. The sequence is that of Probable glycine dehydrogenase (decarboxylating) subunit 1 from Sorangium cellulosum (strain So ce56) (Polyangium cellulosum (strain So ce56)).